Here is a 321-residue protein sequence, read N- to C-terminus: uncharacterized protein (321 aa).

This is an uncharacterized protein from Archaeoglobus fulgidus (strain ATCC 49558 / DSM 4304 / JCM 9628 / NBRC 100126 / VC-16).